The primary structure comprises 201 residues: Prostamide/prostaglandin F synthase (201 aa).

Belongs to the peroxiredoxin-like PRXL2 family. Prostamide/prostaglandin F synthase subfamily.

Its subcellular location is the cytoplasm. It is found in the cytosol. It catalyses the reaction prostaglandin H2 + [thioredoxin]-dithiol = prostaglandin F2alpha + [thioredoxin]-disulfide. The catalysed reaction is prostamide F2alpha + [thioredoxin]-disulfide = prostamide H2 + [thioredoxin]-dithiol. Its function is as follows. Catalyzes the reduction of prostaglandin-ethanolamide H(2) (prostamide H(2)) to prostamide F(2alpha) with NADPH as proton donor. Also able to reduce prostaglandin H(2) to prostaglandin F(2alpha). This Xenopus laevis (African clawed frog) protein is Prostamide/prostaglandin F synthase (prxl2b).